Reading from the N-terminus, the 331-residue chain is ATPase GET3 (331 aa).

32–39 (KGGVGKTT) contacts ATP. The active site involves Asp61. ATP-binding residues include Glu235 and Asn262. Positions 273 and 276 each coordinate Zn(2+).

It belongs to the arsA ATPase family. In terms of assembly, homodimer.

The protein resides in the cytoplasm. The protein localises to the endoplasmic reticulum. ATPase required for the post-translational delivery of tail-anchored (TA) proteins to the endoplasmic reticulum. Recognizes and selectively binds the transmembrane domain of TA proteins in the cytosol. This complex then targets to the endoplasmic reticulum by membrane-bound receptors, where the tail-anchored protein is released for insertion. This process is regulated by ATP binding and hydrolysis. ATP binding drives the homodimer towards the closed dimer state, facilitating recognition of newly synthesized TA membrane proteins. ATP hydrolysis is required for insertion. Subsequently, the homodimer reverts towards the open dimer state, lowering its affinity for the membrane-bound receptor, and returning it to the cytosol to initiate a new round of targeting. The sequence is that of ATPase GET3 from Malassezia globosa (strain ATCC MYA-4612 / CBS 7966) (Dandruff-associated fungus).